The sequence spans 383 residues: Outer membrane protein S2 (383 aa).

The signal sequence occupies residues 1-21 (MKRKVLALVIPALLAAGAAHA).

This sequence belongs to the Gram-negative porin family. As to quaternary structure, homotrimer.

The protein localises to the cell outer membrane. Its function is as follows. Forms pores that allow passive diffusion of small molecules across the outer membrane. This Salmonella typhi protein is Outer membrane protein S2 (ompS2).